Reading from the N-terminus, the 51-residue chain is UPF0320 protein YOL166W-A (51 aa).

The protein belongs to the UPF0320 family.

The protein is UPF0320 protein YOL166W-A of Saccharomyces cerevisiae (strain ATCC 204508 / S288c) (Baker's yeast).